The sequence spans 37 residues: Alpha-conotoxin TxID (37 aa).

Positions 1–21 (FDGRNAAGNDKMSALMALTTR) are excised as a propeptide. Disulfide bonds link Cys-23–Cys-29 and Cys-24–Cys-36. Position 36 is a cysteine amide (Cys-36).

Belongs to the conotoxin A superfamily. Post-translationally, unmodified Met-32 is essential for toxin binding to rat alpha-3-beta-4/CHRNA3-CHRNB4 nAChR. An oxidation of this methionine provokes a 13.3-fold decrease in inhibitory potency (IC(50)=245 nM instead of 18 nM). Owing to its potent activity, derivatives of this toxin have a potential in the development of a novel drug. Unfortunately, the oxidation of the methionine is readily to happen during toxin synthesis and oxidation steps as well as under oxidative environment in vivo, which should still be considered to find a solution to this major drawback. Expressed by the venom duct.

It localises to the secreted. In terms of biological role, alpha-conotoxins act on postsynaptic membranes, they bind to the nicotinic acetylcholine receptors (nAChR) and thus inhibit them. This toxin inhibits alpha-3-beta-4/CHRNA3-CHRNB4 (IC(50)=3.6-18.38 nM), alpha-6/alpha-3-beta-4 (CHRNA6/CHRNA3-CHRNB4) (IC(50)=33.9-94.1 nM), and alpha-2-beta-4/CHRNA2-CHRNB4 (IC(50)=4550 nM) nAChRs. The toxin competes with agonists in the orthosteric binding site of alpha-3-beta-4/CHRNA3-CHRNB4 and alpha-6-beta-4/CHRNA6-CHRNB4. This chain is Alpha-conotoxin TxID, found in Conus textile (Cloth-of-gold cone).